Reading from the N-terminus, the 193-residue chain is Probable GTP-binding protein EngB (193 aa).

Positions 22 to 193 (GLPEFAFAGR…LIAVLESYLA (172 aa)) constitute an EngB-type G domain. GTP-binding positions include 30 to 37 (GRSNVGKS), 57 to 61 (GKTQG), 75 to 78 (DLPG), 142 to 145 (TKID), and 173 to 175 (FSS). Mg(2+) is bound by residues serine 37 and threonine 59.

Belongs to the TRAFAC class TrmE-Era-EngA-EngB-Septin-like GTPase superfamily. EngB GTPase family. Requires Mg(2+) as cofactor.

In terms of biological role, necessary for normal cell division and for the maintenance of normal septation. The chain is Probable GTP-binding protein EngB from Desulfotalea psychrophila (strain LSv54 / DSM 12343).